We begin with the raw amino-acid sequence, 469 residues long: Argininosuccinate lyase (469 aa).

Belongs to the lyase 1 family. Argininosuccinate lyase subfamily.

It localises to the cytoplasm. It carries out the reaction 2-(N(omega)-L-arginino)succinate = fumarate + L-arginine. It functions in the pathway amino-acid biosynthesis; L-arginine biosynthesis; L-arginine from L-ornithine and carbamoyl phosphate: step 3/3. The polypeptide is Argininosuccinate lyase (Cupriavidus metallidurans (strain ATCC 43123 / DSM 2839 / NBRC 102507 / CH34) (Ralstonia metallidurans)).